Reading from the N-terminus, the 199-residue chain is Putative peroxiredoxin ycf42 (199 aa).

In terms of domain architecture, Thioredoxin spans 8–165; sequence LQVGQIAPDF…TLRVLQAIQY (158 aa). Cys53 serves as the catalytic Cysteine sulfenic acid (-SOH) intermediate.

Belongs to the peroxiredoxin family. AhpC/Prx1 subfamily. Homodimer; disulfide-linked, upon oxidation. In terms of processing, the Cys-53-SH group is the primary site of oxidation by H(2)O(2), and the oxidized Cys-53 (probably Cys-SOH) rapidly reacts with Cys-174-SH of the other subunit to form an intermolecular disulfide. This disulfide is subsequently reduced by thioredoxin.

The protein localises to the plastid. It localises to the chloroplast. The catalysed reaction is a hydroperoxide + [thioredoxin]-dithiol = an alcohol + [thioredoxin]-disulfide + H2O. In terms of biological role, thiol-specific peroxidase that catalyzes the reduction of hydrogen peroxide and organic hydroperoxides to water and alcohols, respectively. Plays a role in cell protection against oxidative stress by detoxifying peroxides. The sequence is that of Putative peroxiredoxin ycf42 (ycf42) from Porphyra purpurea (Red seaweed).